Here is a 439-residue protein sequence, read N- to C-terminus: MSLANVVVIGAQWGDEGKGKITDLLSRSADVVVRYQGGVNAGHTIVVDDKVLKLHLIPSGILYPETICLIGSGTVIDPKVMLKELDMLLENSIDISGLQLASTAHVTMPYHRLLDEAMEQQRGDQRIGTTGRGIGPTYADKSQRNGIRVLDLLDSQRLRERLRGPLQEKNRLLEQIYGVAPLDSEQVIEEYLGYGQRLAPHVVDCIQTIHQAARSRKNILFEGAQGTLLDLDHGTYPYVTSSNPISGGACIGAGVGPTLIDRVIGVAKAYTTRVGEGPFPTELEGSINEQLCDRGGEFGTTTGRRRRCGWFDGVIGRYAVAVNGLDCLAITKLDVLDELDEIRVCVAYELNGERIEHFPSSAEDFARCHPIFETLPGWQCTTADCRRLEDLPTTAMDYLRFLADLMEVPIAIVSLGANRDQTIVVEDPIHGPKRALLSA.

GTP contacts are provided by residues 14–20 (GDEGKGK) and 42–44 (GHT). D15 serves as the catalytic Proton acceptor. Residues D15 and G42 each contribute to the Mg(2+) site. Residues 15–18 (DEGK), 40–43 (NAGH), T130, R144, Q225, T240, and R304 each bind IMP. The active-site Proton donor is H43. 300–306 (TTTGRRR) lines the substrate pocket. GTP is bound by residues R306, 332–334 (KLD), and 414–416 (SLG).

This sequence belongs to the adenylosuccinate synthetase family. In terms of assembly, homodimer. It depends on Mg(2+) as a cofactor.

The protein resides in the cytoplasm. It catalyses the reaction IMP + L-aspartate + GTP = N(6)-(1,2-dicarboxyethyl)-AMP + GDP + phosphate + 2 H(+). It functions in the pathway purine metabolism; AMP biosynthesis via de novo pathway; AMP from IMP: step 1/2. In terms of biological role, plays an important role in the de novo pathway of purine nucleotide biosynthesis. Catalyzes the first committed step in the biosynthesis of AMP from IMP. The chain is Adenylosuccinate synthetase from Prochlorococcus marinus (strain MIT 9303).